Here is a 179-residue protein sequence, read N- to C-terminus: Large ribosomal subunit protein uL5 (179 aa).

It belongs to the universal ribosomal protein uL5 family. In terms of assembly, part of the 50S ribosomal subunit; part of the 5S rRNA/L5/L18/L25 subcomplex. Contacts the 5S rRNA and the P site tRNA. Forms a bridge to the 30S subunit in the 70S ribosome.

In terms of biological role, this is one of the proteins that bind and probably mediate the attachment of the 5S RNA into the large ribosomal subunit, where it forms part of the central protuberance. In the 70S ribosome it contacts protein S13 of the 30S subunit (bridge B1b), connecting the 2 subunits; this bridge is implicated in subunit movement. Contacts the P site tRNA; the 5S rRNA and some of its associated proteins might help stabilize positioning of ribosome-bound tRNAs. This chain is Large ribosomal subunit protein uL5, found in Anoxybacillus flavithermus (strain DSM 21510 / WK1).